We begin with the raw amino-acid sequence, 75 residues long: Exodeoxyribonuclease 7 small subunit (75 aa).

It belongs to the XseB family. In terms of assembly, heterooligomer composed of large and small subunits.

The protein localises to the cytoplasm. The catalysed reaction is Exonucleolytic cleavage in either 5'- to 3'- or 3'- to 5'-direction to yield nucleoside 5'-phosphates.. Functionally, bidirectionally degrades single-stranded DNA into large acid-insoluble oligonucleotides, which are then degraded further into small acid-soluble oligonucleotides. This chain is Exodeoxyribonuclease 7 small subunit, found in Geobacter sp. (strain M21).